The chain runs to 1679 residues: AF4/FMR2 family member lilli (1679 aa).

8 disordered regions span residues 1–21 (MAQQ…SSIN), 55–78 (NYNM…QQGI), 124–305 (RSAP…EKDV), 406–539 (LHQL…GAQN), 580–609 (MGAG…SNKW), 733–755 (DSGT…AVGG), 783–1172 (QPTQ…TTPH), and 1197–1319 (TPAQ…LQIG). Residues 69 to 78 (REKIERQQGI) are compositionally biased toward basic and acidic residues. Composition is skewed to low complexity over residues 144–181 (SLGH…QQQQ) and 212–244 (PSSS…SSGG). T421 is modified (phosphothreonine). Positions 429–442 (LKTEKNHSLEKQDS) are enriched in basic and acidic residues. Residues 444–455 (LENDLELSESED) show a composition bias toward acidic residues. S451 and S453 each carry phosphoserine. The segment covering 464 to 484 (SAGNSSNSSESDSSESGSESS) has biased composition (low complexity). Positions 492 to 501 (HPNHQQHHHQ) are enriched in basic residues. The segment covering 502–532 (LQQQQQQQQQQASMQQQQVLQQQQQHRPQPL) has biased composition (low complexity). Positions 582–591 (AGSGSGGTLS) are enriched in gly residues. Over residues 598–609 (NKTPSPTESNKW) the composition is skewed to polar residues. A compositionally biased stretch (low complexity) spans 733–752 (DSGTSASGSSSSSSSSSDSA). Over residues 783–796 (QPTQSQKAPPSNSV) the composition is skewed to polar residues. Residues 810-820 (QRQKKPRKKKA) show a composition bias toward basic residues. Phosphoserine is present on residues S829 and S830. Residues 859-871 (KKGRGRPRKQQQS) constitute a DNA-binding region (a.T hook). Residues 868 to 906 (QQQSGGSGNLSSASAGSSSQTKGPTLTAAKKPLAKTPLA) show a composition bias toward low complexity. A phosphoserine mark is found at S879 and S881. The segment covering 917–927 (SQSSSNGNTPT) has biased composition (polar residues). Low complexity-rich tracts occupy residues 957–973 (SSSA…SSSS) and 1001–1012 (GSGSSSPSSSGS). Polar residues predominate over residues 1019–1030 (TRSQVGSGQALA). Positions 1042-1068 (SQHSQHLSSSECSSSSGGCTAVCSSSS) are enriched in low complexity. Over residues 1073–1090 (EGRREKERERKPKSDKNK) the composition is skewed to basic and acidic residues. Residues 1130–1140 (QPPPPQAPPAA) are compositionally biased toward pro residues. The span at 1198–1213 (PAQQNGHLTPKDQATN) shows a compositional bias: polar residues. Basic and acidic residues-rich tracts occupy residues 1234 to 1251 (EHPV…EAKF) and 1260 to 1288 (FQLK…EQPP). Residue S1368 is modified to Phosphoserine. Residue T1370 is modified to Phosphothreonine. Low complexity predominate over residues 1569 to 1589 (GNTPSSISPSNSVGSQGSGSN). A disordered region spans residues 1569-1594 (GNTPSSISPSNSVGSQGSGSNTPPGR).

It belongs to the AF4 family.

It is found in the nucleus. In terms of biological role, has a role in transcriptional regulation. Acts in parallel with the Ras/MAPK and the PI3K/PKB pathways in the control of cell identity and cellular growth. Essential for regulation of the cytoskeleton and cell growth but not for cell proliferation or growth rate. Required specifically for the microtubule-based basal transport of lipid droplets. Plays a partially redundant function downstream of Raf in cell fate specification in the developing eye. Pair-rule protein that regulates embryonic cellularization, gastrulation and segmentation. This Drosophila erecta (Fruit fly) protein is AF4/FMR2 family member lilli.